Here is a 274-residue protein sequence, read N- to C-terminus: NAD(P)H dehydrogenase [quinone] 1 (274 aa).

FAD-binding positions include His12, 18–19, and Gln67; that span reads FN. Ser82 is modified (phosphoserine). 104-107 is an FAD binding site; sequence LQWF. 126-128 serves as a coordination point for substrate; that stretch reads AYT. FAD contacts are provided by residues 148–151, Tyr156, and Arg201; that span reads TTGG. Positions 225 to 274 are important for apoenzyme conformational stability; the sequence is PSSLFDLNFQAGFLMKKEVQDEEKNKKFGLSVGHHLGKSIPTDNQIKARK. Glycyl lysine isopeptide (Lys-Gly) (interchain with G-Cter in SUMO2) cross-links involve residues Lys250 and Lys251.

The protein belongs to the NAD(P)H dehydrogenase (quinone) family. Homodimer. Interacts with PDLIM4 isoform 2; this interaction stabilizes PDLIM4 isoform 2 in response to oxidative stress and protects it from ubiquitin-independent degradation by the core 20S proteasome. Interacts with TP73 (via SAM domain); this interaction is NADH-dependent, stabilizes TP73 in response to oxidative stress and protects it from ubiquitin-independent degradation by the 20S proteasome. Interacts with TP53; this interaction is NADH-dependent, stabilizes TP53 in response to oxidative stress and protects it from ubiquitin-independent degradation by the 20S proteasome. The cofactor is FAD.

It is found in the cytoplasm. The protein resides in the cytosol. The catalysed reaction is a quinone + NADH + H(+) = a quinol + NAD(+). It catalyses the reaction a quinone + NADPH + H(+) = a quinol + NADP(+). It carries out the reaction ubiquinone-10 + NADH + H(+) = ubiquinol-10 + NAD(+). The enzyme catalyses menadione + NADH + H(+) = menadiol + NAD(+). With respect to regulation, inhibited by dicoumarol. Functionally, flavin-containing quinone reductase that catalyzes two-electron reduction of quinones to hydroquinones using either NADH or NADPH as electron donors. In a ping-pong kinetic mechanism, the electrons are sequentially transferred from NAD(P)H to flavin cofactor and then from reduced flavin to the quinone, bypassing the formation of semiquinone and reactive oxygen species. Regulates cellular redox state primarily through quinone detoxification. Reduces components of plasma membrane redox system such as coenzyme Q and vitamin quinones, producing antioxidant hydroquinone forms. In the process may function as superoxide scavenger to prevent hydroquinone oxidation and facilitate excretion. Alternatively, can activate quinones and their derivatives by generating redox reactive hydroquinones with DNA cross-linking antitumor potential. Acts as a gatekeeper of the core 20S proteasome known to degrade proteins with unstructured regions. Upon oxidative stress, interacts with tumor suppressors TP53 and TP73 in a NADH-dependent way and inhibits their ubiquitin-independent degradation by the 20S proteasome. The protein is NAD(P)H dehydrogenase [quinone] 1 of Homo sapiens (Human).